The following is a 482-amino-acid chain: MKFIVKPHPEIFVKSESVRKRFTKILECNIRNIVKSRTESVAVFNRRDHIEVTSESNEYHAEVLEILTHTPGIHHVLEVKQSEFKDLHDIYEQVLELSRPLIENKTFVVRAKRRGKHDFTSIELERYVGGGLNQAVESARVKLHNPDVTVKVEVSGDKLNQVLARHKGLGGFPLGTQEDVLSLISGGFDSGVSSYLHIKRGSKVHYCFFNLGGPAHEIGVKQVSHYLWNKYGSSAKVRFISVDFEPVVAEILEKVDDGQMGVILKRMFMRAAGMIAEKFKIEALVTGEALGQVSSQTLTNLRHIDNVTDTLILRPLINWDKEDIINLAREIGTEDFAKTMPEYCGVISKKPTVKAVKEKLEAEEAKFDFSILEKVVYEARQMDIRDIAKESEQAAPEVEQVQAVEEHAVVLDIRSPDEEDDNPLEIAGVDVKHIPFYKLGTQFGDLDQSKTYLLYCDRGVMSRLQALYLQEQGFNNVKVYRP.

Residues 61–165 (AEVLEILTHT…GDKLNQVLAR (105 aa)) enclose the THUMP domain. ATP is bound by residues 183 to 184 (LI), Lys-265, Gly-287, and Gln-296. Cys-344 and Cys-456 form a disulfide bridge. One can recognise a Rhodanese domain in the interval 404-482 (VEEHAVVLDI…GFNNVKVYRP (79 aa)). Cys-456 functions as the Cysteine persulfide intermediate in the catalytic mechanism.

Belongs to the ThiI family.

Its subcellular location is the cytoplasm. The catalysed reaction is [ThiI sulfur-carrier protein]-S-sulfanyl-L-cysteine + a uridine in tRNA + 2 reduced [2Fe-2S]-[ferredoxin] + ATP + H(+) = [ThiI sulfur-carrier protein]-L-cysteine + a 4-thiouridine in tRNA + 2 oxidized [2Fe-2S]-[ferredoxin] + AMP + diphosphate. The enzyme catalyses [ThiS sulfur-carrier protein]-C-terminal Gly-Gly-AMP + S-sulfanyl-L-cysteinyl-[cysteine desulfurase] + AH2 = [ThiS sulfur-carrier protein]-C-terminal-Gly-aminoethanethioate + L-cysteinyl-[cysteine desulfurase] + A + AMP + 2 H(+). It participates in cofactor biosynthesis; thiamine diphosphate biosynthesis. Its function is as follows. Catalyzes the ATP-dependent transfer of a sulfur to tRNA to produce 4-thiouridine in position 8 of tRNAs, which functions as a near-UV photosensor. Also catalyzes the transfer of sulfur to the sulfur carrier protein ThiS, forming ThiS-thiocarboxylate. This is a step in the synthesis of thiazole, in the thiamine biosynthesis pathway. The sulfur is donated as persulfide by IscS. This chain is tRNA sulfurtransferase, found in Vibrio parahaemolyticus serotype O3:K6 (strain RIMD 2210633).